The following is a 180-amino-acid chain: Large ribosomal subunit protein uL5 (180 aa).

Belongs to the universal ribosomal protein uL5 family. Part of the 50S ribosomal subunit; part of the 5S rRNA/L5/L18/L25 subcomplex. Contacts the 5S rRNA and the P site tRNA. Forms a bridge to the 30S subunit in the 70S ribosome.

This is one of the proteins that bind and probably mediate the attachment of the 5S RNA into the large ribosomal subunit, where it forms part of the central protuberance. In the 70S ribosome it contacts protein S13 of the 30S subunit (bridge B1b), connecting the 2 subunits; this bridge is implicated in subunit movement. Contacts the P site tRNA; the 5S rRNA and some of its associated proteins might help stabilize positioning of ribosome-bound tRNAs. This is Large ribosomal subunit protein uL5 from Streptococcus pyogenes serotype M49 (strain NZ131).